A 285-amino-acid polypeptide reads, in one-letter code: NADPH-dependent 7-cyano-7-deazaguanine reductase (285 aa).

91–93 (IES) is a binding site for substrate. 93 to 94 (SK) is a binding site for NADPH. Catalysis depends on Cys-191, which acts as the Thioimide intermediate. Asp-198 (proton donor) is an active-site residue. Residue 230 to 231 (HE) participates in substrate binding. 259 to 260 (RG) contacts NADPH.

It belongs to the GTP cyclohydrolase I family. QueF type 2 subfamily. Homodimer.

Its subcellular location is the cytoplasm. The enzyme catalyses 7-aminomethyl-7-carbaguanine + 2 NADP(+) = 7-cyano-7-deazaguanine + 2 NADPH + 3 H(+). It functions in the pathway tRNA modification; tRNA-queuosine biosynthesis. Functionally, catalyzes the NADPH-dependent reduction of 7-cyano-7-deazaguanine (preQ0) to 7-aminomethyl-7-deazaguanine (preQ1). The protein is NADPH-dependent 7-cyano-7-deazaguanine reductase of Legionella pneumophila (strain Paris).